Reading from the N-terminus, the 168-residue chain is Crossover junction endodeoxyribonuclease RuvC (168 aa).

Catalysis depends on residues D8, E68, and D140. Mg(2+)-binding residues include D8, E68, and D140.

It belongs to the RuvC family. Homodimer which binds Holliday junction (HJ) DNA. The HJ becomes 2-fold symmetrical on binding to RuvC with unstacked arms; it has a different conformation from HJ DNA in complex with RuvA. In the full resolvosome a probable DNA-RuvA(4)-RuvB(12)-RuvC(2) complex forms which resolves the HJ. Mg(2+) is required as a cofactor.

Its subcellular location is the cytoplasm. The enzyme catalyses Endonucleolytic cleavage at a junction such as a reciprocal single-stranded crossover between two homologous DNA duplexes (Holliday junction).. Its function is as follows. The RuvA-RuvB-RuvC complex processes Holliday junction (HJ) DNA during genetic recombination and DNA repair. Endonuclease that resolves HJ intermediates. Cleaves cruciform DNA by making single-stranded nicks across the HJ at symmetrical positions within the homologous arms, yielding a 5'-phosphate and a 3'-hydroxyl group; requires a central core of homology in the junction. The consensus cleavage sequence is 5'-(A/T)TT(C/G)-3'. Cleavage occurs on the 3'-side of the TT dinucleotide at the point of strand exchange. HJ branch migration catalyzed by RuvA-RuvB allows RuvC to scan DNA until it finds its consensus sequence, where it cleaves and resolves the cruciform DNA. This chain is Crossover junction endodeoxyribonuclease RuvC, found in Gluconacetobacter diazotrophicus (strain ATCC 49037 / DSM 5601 / CCUG 37298 / CIP 103539 / LMG 7603 / PAl5).